Reading from the N-terminus, the 1070-residue chain is Potassium/chloride cotransporter 3 (1070 aa).

Transmembrane regions (helical) follow at residues 92–112 (GVML…TMFI), 114–134 (LFWV…AICC), 142–162 (ISLS…YFII), 174–194 (VGIL…VGGV), 196–216 (VILM…LHDT), 228–248 (LYGT…VKFV), 251–271 (LAPV…GGGI), 400–420 (FFML…GTNM), 433–453 (VGTI…AILF), 473–493 (TMVV…GAFL), 534–554 (PFLG…LGAV), 557–577 (IAEV…LIAV), 600–620 (LLGA…LACI), 791–811 (LVLF…LIVT), and 827–847 (FIDI…AYLL).

As to expression, expressed in the amphid sheath glia and the cephalic sheath glia. Also expressed in the inner labial and outer labial sheath and socket glia and as well as phasmid sheath glia.

It localises to the cell membrane. Functionally, probable potassium/chloride cotransporter that functions in the amphid sheath glial cells to regulate thermotaxis behavior. By maintaining chloride homeostasis, negatively regulates guanylate cyclase gcy-8 in the thermosensory AFD neurons and thereby controls the microvilli receptive ending morphology of the AFD neurons and thermotaxis. Modulates the temperature-evoked neuronal activity of the AFD neurons such as calcium responses to temperature gradients. Might also play a role in the chemotaxis behavior mediated by the sensory neurons AWA and AWC. The sequence is that of Potassium/chloride cotransporter 3 (kcc-3) from Caenorhabditis elegans.